Reading from the N-terminus, the 475-residue chain is Vitronectin (475 aa).

The N-terminal stretch at 1-19 (MAPLRPIFTLALLLWVVLA) is a signal peptide. An SMB domain is found at 20 to 63 (DQESCKDRCTEGFNANRKCQCDELCSYYQSCCADYAAECKPQVT). Intrachain disulfides connect Cys24–Cys28, Cys24–Cys40, Cys28–Cys58, Cys38–Cys40, Cys38–Cys51, Cys44–Cys50, and Cys51–Cys58. The Cell attachment site motif lies at 64 to 66 (RGD). Phosphothreonine is present on Thr69. Tyr75, Tyr78, and Tyr80 each carry sulfotyrosine. A glycan (N-linked (GlcNAc...) asparagine) is linked at Asn87. Positions 87–123 (NASVHAQPESPTVGQEPTLSPDLQTEGGAEPTHEVPL) are disordered. A compositionally biased stretch (polar residues) spans 95 to 109 (ESPTVGQEPTLSPDL). 3 Hemopexin repeats span residues 158-202 (GKPF…VWGI), 203-250 (EGPI…FSGI), and 251-305 (PDNV…FEHF). N-linked (GlcNAc...) asparagine glycans are attached at residues Asn169 and Asn242. Tyr279 and Tyr282 each carry sulfotyrosine. Ser312 is modified (phosphoserine). Residues 359–391 (LTPSPSAKKQKSRRRSRKRYRSRYGRGRSQNSR) are disordered. The segment covering 366–384 (KKQKSRRRSRKRYRSRYGR) has biased composition (basic residues). A glycosaminoglycan binding region region spans residues 366–392 (KKQKSRRRSRKRYRSRYGRGRSQNSRR). Ser394 bears the Phosphoserine mark. One copy of the Hemopexin 4 repeat lies at 419–469 (TSWLKPATSEPIQSVYFFSGDKYYRVNLRTQRVDTVNPPYPRSIAQYWLGC).

Interacts with SERPINE1/PAI1 and C1QBP. Monomer. In terms of processing, sulfated on tyrosine residues. Post-translationally, N- and O-glycosylated. It has been suggested that the active SMB domain may be permitted considerable disulfide bond heterogeneity or variability, thus two alternate disulfide patterns based on 3D structures are described with 1 disulfide bond conserved in both. In terms of tissue distribution, plasma.

The protein localises to the secreted. It localises to the extracellular space. Vitronectin is a cell adhesion and spreading factor found in serum and tissues. Vitronectin interact with glycosaminoglycans and proteoglycans. Is recognized by certain members of the integrin family and serves as a cell-to-substrate adhesion molecule. Inhibitor of the membrane-damaging effect of the terminal cytolytic complement pathway. The polypeptide is Vitronectin (VTN) (Oryctolagus cuniculus (Rabbit)).